A 963-amino-acid chain; its full sequence is VPS35 endosomal protein-sorting factor-like (963 aa).

The disordered stretch occupies residues 43–112 (SKTKKVSRKG…DKDENSFVGP (70 aa)). The segment covering 51-72 (KGSTSSTSSSSSSSVIDPLSSV) has biased composition (low complexity). Ser265 carries the phosphoserine modification. A helical membrane pass occupies residues 699–719 (AFVRACVAYCFITIPSLVGIF).

This sequence belongs to the VPS35L family. As to quaternary structure, component of the heterotrimeric retriever complex formed by VPS26C, VPS29 and VPS35L. Interacts with VPS29. Interacts with COMMD1, CCDC93 and CCDC22; associates with the CCC (COMMD/CCDC22/CCDC93) complex which contains at least COMMD1 (and possibly other COMM domain-containing proteins), CCDC22 and CCDC93. Interacts with WASHC1, WASHC2A and WASHC2C. Interacts with SNX17 and SNX31.

It is found in the membrane. It localises to the endosome. Its function is as follows. Acts as a component of the retriever complex. The retriever complex is a heterotrimeric complex related to retromer cargo-selective complex (CSC) and essential for retromer-independent retrieval and recycling of numerous cargos such as integrin alpha-5/beta-1 (ITGA5:ITGB1). The recruitment of the retriever complex to the endosomal membrane involves CCC and WASH complexes. In the endosomes, drives the retrieval and recycling of NxxY-motif-containing cargo proteins by coupling to SNX17, a cargo essential for the homeostatic maintenance of numerous cell surface proteins associated with processes that include cell migration, cell adhesion, nutrient supply and cell signaling. Involved in copper-dependent ATP7A trafficking between the trans-Golgi network and vesicles in the cell periphery; the function is proposed to depend on its association with the CCC complex and cooperation with the WASH complex on early endosomes. Seems not to be required for CCC complex stability. The chain is VPS35 endosomal protein-sorting factor-like from Mus musculus (Mouse).